Consider the following 53-residue polypeptide: Sec-independent protein translocase protein TatA (53 aa).

The chain crosses the membrane as a helical span at residues 1–21; the sequence is MGMSLSHLLIVLLIIFVLFGA.

It belongs to the TatA/E family. The Tat system comprises two distinct complexes: a TatABC complex, containing multiple copies of TatA, TatB and TatC subunits, and a separate TatA complex, containing only TatA subunits. Substrates initially bind to the TatABC complex, which probably triggers association of the separate TatA complex to form the active translocon.

It is found in the cell inner membrane. Part of the twin-arginine translocation (Tat) system that transports large folded proteins containing a characteristic twin-arginine motif in their signal peptide across membranes. TatA could form the protein-conducting channel of the Tat system. The protein is Sec-independent protein translocase protein TatA of Rickettsia conorii (strain ATCC VR-613 / Malish 7).